The sequence spans 593 residues: MRSFSQLWPTLKRLLAYGSPWRKPLGIAVLMMWVAAAAEVSGPLLISYFIDNMVAKNNLPLKVVAGLAAAYVGLQLFAAGLHYAQSLLFNRAAVGVVQQLRTDVMDAALRQPLSEFDTQPVGQVISRVTNDTEVIRDLYVTVVATVLRSAALVGAMLVAMFSLDWRMALVAIMIFPVVLVVMVIYQRYSTPIVRRVRAYLADINDGFNEIINGMSVIQQFRQQARFGERMGEASRSHYMARMQTLRLDGFLLRPLLSLFSSLILCGLLMLFGFSASGTIEVGVLYAFISYLGRLNEPLIELTTQQAMLQQAVVAGERVFELMDGPRQQYGNDDRPLQSGTIEVDNVSFAYRDDNLVLKNINLSVPSRNFVALVGHTGSGKSTLASLLMGYYPLTEGEIRLDGRPLSSLSHSALRQGVAMVQQDPVVLADTFLANVTLGRDISEERVWQALETVQLAELARSMSDGIYTPLGEQGNNLSVGQKQLLALARVLVETPQILILDEATASIDSGTEQAIQHALAAVREHTTLVVIAHRLSTIVDADTILVLHRGQAVEQGTHQQLLAAQGRYWQMYQLQLAGEELAASVREEESLSA.

Topologically, residues 1–25 (MRSFSQLWPTLKRLLAYGSPWRKPL) are cytoplasmic. The region spanning 25–310 (LGIAVLMMWV…LTTQQAMLQQ (286 aa)) is the ABC transmembrane type-1 domain. Residues 26–46 (GIAVLMMWVAAAAEVSGPLLI) form a helical membrane-spanning segment. Residues 47–62 (SYFIDNMVAKNNLPLK) lie on the Periplasmic side of the membrane. Residues 63–83 (VVAGLAAAYVGLQLFAAGLHY) traverse the membrane as a helical segment. The Cytoplasmic segment spans residues 84 to 140 (AQSLLFNRAAVGVVQQLRTDVMDAALRQPLSEFDTQPVGQVISRVTNDTEVIRDLYV). A helical membrane pass occupies residues 141–161 (TVVATVLRSAALVGAMLVAMF). Topologically, residues 162-164 (SLD) are periplasmic. A helical transmembrane segment spans residues 165–185 (WRMALVAIMIFPVVLVVMVIY). The Cytoplasmic portion of the chain corresponds to 186 to 254 (QRYSTPIVRR…LRLDGFLLRP (69 aa)). Residues 255 to 275 (LLSLFSSLILCGLLMLFGFSA) form a helical membrane-spanning segment. Residues 276–278 (SGT) are Periplasmic-facing. The helical transmembrane segment at 279–299 (IEVGVLYAFISYLGRLNEPLI) threads the bilayer. Over 300–593 (ELTTQQAMLQ…SVREEESLSA (294 aa)) the chain is Cytoplasmic. The region spanning 341–574 (IEVDNVSFAY…QGRYWQMYQL (234 aa)) is the ABC transporter domain. 374-381 (GHTGSGKS) lines the ATP pocket.

It belongs to the ABC transporter superfamily. Drug exporter-2 (TC 3.A.1.117) family.

The protein localises to the cell inner membrane. The enzyme catalyses ATP + H2O + xenobioticSide 1 = ADP + phosphate + xenobioticSide 2.. In Escherichia coli O6:H1 (strain CFT073 / ATCC 700928 / UPEC), this protein is Multidrug resistance-like ATP-binding protein MdlB (mdlB).